Reading from the N-terminus, the 777-residue chain is 1,4-alpha-glucan branching enzyme GlgB (777 aa).

D408 (nucleophile) is an active-site residue. E461 serves as the catalytic Proton donor.

The protein belongs to the glycosyl hydrolase 13 family. GlgB subfamily. In terms of assembly, monomer.

It catalyses the reaction Transfers a segment of a (1-&gt;4)-alpha-D-glucan chain to a primary hydroxy group in a similar glucan chain.. Its pathway is glycan biosynthesis; glycogen biosynthesis. Functionally, catalyzes the formation of the alpha-1,6-glucosidic linkages in glycogen by scission of a 1,4-alpha-linked oligosaccharide from growing alpha-1,4-glucan chains and the subsequent attachment of the oligosaccharide to the alpha-1,6 position. In Actinobacillus pleuropneumoniae serotype 7 (strain AP76), this protein is 1,4-alpha-glucan branching enzyme GlgB.